We begin with the raw amino-acid sequence, 336 residues long: Probable allantoicase (336 aa).

The protein belongs to the allantoicase family.

The catalysed reaction is allantoate + H2O = (S)-ureidoglycolate + urea. It participates in nitrogen metabolism; (S)-allantoin degradation; (S)-ureidoglycolate from allantoate (aminidohydrolase route): step 1/1. The protein is Probable allantoicase of Acinetobacter baumannii (strain SDF).